A 379-amino-acid chain; its full sequence is Homoserine O-succinyltransferase (379 aa).

The 310-residue stretch at 48 to 357 (NAVLICHALS…SAHGHDAFLM (310 aa)) folds into the AB hydrolase-1 domain. Ser154 serves as the catalytic Nucleophile. Arg224 contacts substrate. Residues Asp319 and His352 contribute to the active site. Asp353 contributes to the substrate binding site.

It belongs to the AB hydrolase superfamily. MetX family. Homodimer.

It is found in the cytoplasm. It carries out the reaction L-homoserine + succinyl-CoA = O-succinyl-L-homoserine + CoA. The protein operates within amino-acid biosynthesis; L-methionine biosynthesis via de novo pathway; O-succinyl-L-homoserine from L-homoserine: step 1/1. Its activity is regulated as follows. Activity increases in the presence of MetW. In terms of biological role, transfers a succinyl group from succinyl-CoA to L-homoserine, forming succinyl-L-homoserine. The polypeptide is Homoserine O-succinyltransferase (Neisseria gonorrhoeae).